The sequence spans 223 residues: Transcriptional regulator HMO1 (223 aa).

Disordered regions lie at residues 69 to 89 (IEAT…APKK) and 165 to 223 (DGSA…HGSP). Residues 70–86 (EATESKKKRKQEKDPNA) are compositionally biased toward basic and acidic residues. A DNA-binding region (HMG box) is located at residues 87–160 (PKKPLTMFFQ…IYNIEKKKYE (74 aa)). The span at 204–223 (KKKKKTEKKEKKKKSGHGSP) shows a compositional bias: basic residues.

Its subcellular location is the nucleus. Transcription factor that binds upstream of hexose and ergosterol metabolism, as well as cell cycle genes. Activates pseudohyphal growth. This is Transcriptional regulator HMO1 (HMO1) from Candida albicans (strain SC5314 / ATCC MYA-2876) (Yeast).